The sequence spans 357 residues: Phosphoribosylformylglycinamidine cyclo-ligase (357 aa).

Belongs to the AIR synthase family.

The protein localises to the cytoplasm. The enzyme catalyses 2-formamido-N(1)-(5-O-phospho-beta-D-ribosyl)acetamidine + ATP = 5-amino-1-(5-phospho-beta-D-ribosyl)imidazole + ADP + phosphate + H(+). Its pathway is purine metabolism; IMP biosynthesis via de novo pathway; 5-amino-1-(5-phospho-D-ribosyl)imidazole from N(2)-formyl-N(1)-(5-phospho-D-ribosyl)glycinamide: step 2/2. This chain is Phosphoribosylformylglycinamidine cyclo-ligase, found in Agrobacterium fabrum (strain C58 / ATCC 33970) (Agrobacterium tumefaciens (strain C58)).